The chain runs to 101 residues: Small ribosomal subunit protein uS10 (101 aa).

The protein belongs to the universal ribosomal protein uS10 family. In terms of assembly, part of the 30S ribosomal subunit.

Functionally, involved in the binding of tRNA to the ribosomes. The polypeptide is Small ribosomal subunit protein uS10 (Anaeromyxobacter dehalogenans (strain 2CP-C)).